The chain runs to 379 residues: Succinyl-diaminopimelate desuccinylase (379 aa).

Histidine 70 lines the Zn(2+) pocket. The active site involves aspartate 72. Zn(2+) is bound at residue aspartate 103. Residue glutamate 137 is the Proton acceptor of the active site. Residues glutamate 138, glutamate 166, and histidine 352 each coordinate Zn(2+).

It belongs to the peptidase M20A family. DapE subfamily. Homodimer. The cofactor is Zn(2+). It depends on Co(2+) as a cofactor.

The catalysed reaction is N-succinyl-(2S,6S)-2,6-diaminopimelate + H2O = (2S,6S)-2,6-diaminopimelate + succinate. Its pathway is amino-acid biosynthesis; L-lysine biosynthesis via DAP pathway; LL-2,6-diaminopimelate from (S)-tetrahydrodipicolinate (succinylase route): step 3/3. Its function is as follows. Catalyzes the hydrolysis of N-succinyl-L,L-diaminopimelic acid (SDAP), forming succinate and LL-2,6-diaminopimelate (DAP), an intermediate involved in the bacterial biosynthesis of lysine and meso-diaminopimelic acid, an essential component of bacterial cell walls. In Burkholderia cenocepacia (strain HI2424), this protein is Succinyl-diaminopimelate desuccinylase.